Reading from the N-terminus, the 197-residue chain is Dephospho-CoA kinase (197 aa).

The DPCK domain maps to Leu-4–Lys-197. Ala-12 to Thr-17 is a binding site for ATP.

Belongs to the CoaE family.

Its subcellular location is the cytoplasm. It carries out the reaction 3'-dephospho-CoA + ATP = ADP + CoA + H(+). Its pathway is cofactor biosynthesis; coenzyme A biosynthesis; CoA from (R)-pantothenate: step 5/5. Catalyzes the phosphorylation of the 3'-hydroxyl group of dephosphocoenzyme A to form coenzyme A. This Lactiplantibacillus plantarum (strain ATCC BAA-793 / NCIMB 8826 / WCFS1) (Lactobacillus plantarum) protein is Dephospho-CoA kinase.